We begin with the raw amino-acid sequence, 235 residues long: MNRQLIIAIDGPSGVGKSTLSRRLAQQLRYVNIDTGAMYRCVALAAHRAGLAADDEKSLQALCADMEIRFVRKDGTEKVLLNGEDVSEAIRTPEISLLSSRVSAQPTVRQCMLGLQRQMGEQGGVVLEGRDIGTVVFPSAEVKFFLAATARERGKRRYLELKAKGMDVDLDQTIAEVEARDAADSGRLHAPLRQAEDAVLIDTTCMNIDQVLERMLQVVAERQQVCDPSKEGAAS.

11–19 (GPSGVGKST) contributes to the ATP binding site.

The protein belongs to the cytidylate kinase family. Type 1 subfamily.

Its subcellular location is the cytoplasm. The catalysed reaction is CMP + ATP = CDP + ADP. It carries out the reaction dCMP + ATP = dCDP + ADP. The sequence is that of Cytidylate kinase from Syntrophotalea carbinolica (strain DSM 2380 / NBRC 103641 / GraBd1) (Pelobacter carbinolicus).